The primary structure comprises 628 residues: ATP-binding cassette sub-family F member 2 (628 aa).

Residues 1-57 (MPSDLAKKKAAKKKEAAKARQRPRKGHEENGDAVTEPQVAEEKIEEANGRETTGDGE) form a disordered region. Positions 40 to 53 (AEEKIEEANGRETT) are enriched in basic and acidic residues. ABC transporter domains are found at residues 91-330 (VHII…ENQM) and 401-618 (IMVQ…VDEE). 123 to 130 (GLNGIGKS) contacts ATP. Phosphothreonine is present on Thr223. Position 309 is an N6-acetyllysine (Lys309). 435–442 (GPNGAGKS) serves as a coordination point for ATP. Ser517 carries the post-translational modification Phosphoserine.

This sequence belongs to the ABC transporter superfamily. ABCF family. EF3 subfamily.

This chain is ATP-binding cassette sub-family F member 2, found in Mus musculus (Mouse).